Consider the following 290-residue polypeptide: S-adenosylmethionine decarboxylase proenzyme (290 aa).

S138 serves as the catalytic Schiff-base intermediate with substrate; via pyruvic acid. At S138 the chain carries Pyruvic acid (Ser); by autocatalysis. H143 serves as the catalytic Proton acceptor; for processing activity. Catalysis depends on C166, which acts as the Proton donor; for catalytic activity.

It belongs to the prokaryotic AdoMetDC family. Type 2 subfamily. Heterooctamer of four alpha and four beta chains arranged as a tetramer of alpha/beta heterodimers. It depends on pyruvate as a cofactor. Is synthesized initially as an inactive proenzyme. Formation of the active enzyme involves a self-maturation process in which the active site pyruvoyl group is generated from an internal serine residue via an autocatalytic post-translational modification. Two non-identical subunits are generated from the proenzyme in this reaction, and the pyruvate is formed at the N-terminus of the alpha chain, which is derived from the carboxyl end of the proenzyme. The post-translation cleavage follows an unusual pathway, termed non-hydrolytic serinolysis, in which the side chain hydroxyl group of the serine supplies its oxygen atom to form the C-terminus of the beta chain, while the remainder of the serine residue undergoes an oxidative deamination to produce ammonia and the pyruvoyl group blocking the N-terminus of the alpha chain.

The catalysed reaction is S-adenosyl-L-methionine + H(+) = S-adenosyl 3-(methylsulfanyl)propylamine + CO2. Its pathway is amine and polyamine biosynthesis; S-adenosylmethioninamine biosynthesis; S-adenosylmethioninamine from S-adenosyl-L-methionine: step 1/1. Catalyzes the decarboxylation of S-adenosylmethionine to S-adenosylmethioninamine (dcAdoMet), the propylamine donor required for the synthesis of the polyamines spermine and spermidine from the diamine putrescine. This Heliobacterium modesticaldum (strain ATCC 51547 / Ice1) protein is S-adenosylmethionine decarboxylase proenzyme.